The chain runs to 714 residues: Protein BLISTER (714 aa).

4 disordered regions span residues 1 to 113 (MASA…VDFS), 219 to 261 (SSYL…KRSR), 288 to 325 (VTSS…ASDY), and 519 to 576 (MVQK…SSNT). Over residues 8–33 (RRQEDVEAGRRKLEQFRKRKAAEKAK) the composition is skewed to basic and acidic residues. 2 stretches are compositionally biased toward polar residues: residues 36 to 50 (SQNT…QSVI) and 58 to 74 (SISN…TSNE). Residues 92 to 102 (DGSKERSRQDD) show a composition bias toward basic and acidic residues. Polar residues-rich tracts occupy residues 219–253 (SSYL…SAKS), 288–297 (VTSSGSQLSG), 313–322 (NGPSSLTSGA), and 519–561 (MVQK…SSNQ). A coiled-coil region spans residues 356–525 (NDDFTALEQH…LQTMVQKASS (170 aa)). Positions 562 to 576 (ETDSTTLLESDSSNT) are enriched in low complexity.

As to quaternary structure, interacts with CLF. Expressed in root tips, emerging lateral roots, shoot apical meristem (SAM), vasculature of cotyledons, leaves, sepals and carpels.

It is found in the nucleus. It localises to the cytoplasm. In terms of biological role, is required for normal leaf, flower and seed development and controls cotyledon and leaf patterning by inhibiting premature differentiation. Regulates the expression of a subset of PcG target genes. Is required for the repression of the floral specific genes PI, SEP2, and SEP3, but also for the activation of FLC. Involved in response to cold. Involved in the regulation of COR15A, COR15B, BAM3 and AMY3 transcripts, and ascorbate levels in response to prolonged chilling temperatures. In Arabidopsis thaliana (Mouse-ear cress), this protein is Protein BLISTER.